The sequence spans 526 residues: GMP synthase [glutamine-hydrolyzing] (526 aa).

Residues 9-208 enclose the Glutamine amidotransferase type-1 domain; the sequence is RILILDFGSQ…LVNICGCKQL (200 aa). C86 acts as the Nucleophile in catalysis. Active-site residues include H182 and E184. The GMPS ATP-PPase domain occupies 209–401; it reads WTPGRIIEDA…LGLPYDMVYR (193 aa). 236-242 is an ATP binding site; it reads SGGVDSS.

Homodimer.

The enzyme catalyses XMP + L-glutamine + ATP + H2O = GMP + L-glutamate + AMP + diphosphate + 2 H(+). Its pathway is purine metabolism; GMP biosynthesis; GMP from XMP (L-Gln route): step 1/1. Functionally, catalyzes the synthesis of GMP from XMP. This is GMP synthase [glutamine-hydrolyzing] from Hahella chejuensis (strain KCTC 2396).